Here is a 246-residue protein sequence, read N- to C-terminus: Eukaryotic translation initiation factor 6 (246 aa).

2 positions are modified to phosphoserine; by CK1: serine 174 and serine 175.

The protein belongs to the eIF-6 family. In terms of assembly, monomer. Associates with the 60S ribosomal subunit. In terms of processing, phosphorylation at Ser-174 and Ser-175 promotes nuclear export.

It is found in the cytoplasm. Its subcellular location is the nucleus. It localises to the nucleolus. Its function is as follows. Binds to the 60S ribosomal subunit and prevents its association with the 40S ribosomal subunit to form the 80S initiation complex in the cytoplasm. Is also involved in ribosome biogenesis. Associates with pre-60S subunits in the nucleus and is involved in its nuclear export. The sequence is that of Eukaryotic translation initiation factor 6 (tif-6) from Neurospora crassa (strain ATCC 24698 / 74-OR23-1A / CBS 708.71 / DSM 1257 / FGSC 987).